The following is a 76-amino-acid chain: MTSVQSATCCCLLWLVLCVQLVTPDSPATAQLSRHLTARVPVGPALAYACSVMCAKGYDTVVCTCTRRRGVVSSSI.

The first 24 residues, 1–24 (MTSVQSATCCCLLWLVLCVQLVTP), serve as a signal peptide directing secretion. Positions 25-39 (DSPATAQLSRHLTAR) are excised as a propeptide. Cystine bridges form between cysteine 50–cysteine 63 and cysteine 54–cysteine 65. Residue arginine 69 is modified to Arginine amide. The propeptide occupies 71-76 (VVSSSI).

It belongs to the conotoxin J superfamily. In terms of tissue distribution, expressed by the venom duct.

It is found in the secreted. Its function is as follows. Highly inhibits both nicotinic acetylcholine receptors (neuronal (alpha-3/beta-4) and muscular (alpha-1/beta-1/epsilon/delta) subtypes) and the voltage-gated potassium channel Kv1.6/KCNA6 subtype. This is Conotoxin Bu28 from Conus bullatus (Bubble cone).